We begin with the raw amino-acid sequence, 475 residues long: NADH-quinone oxidoreductase subunit N (475 aa).

A run of 14 helical transmembrane segments spans residues 5–25, 32–52, 71–91, 99–119, 121–141, 155–175, 193–213, 232–252, 266–286, 294–314, 322–342, 366–386, 389–409, and 439–459; these read LALPEIVLALCGLAILVFGVV, FLSCSMLTIGAFVLTGFLVVM, FMKILSLAGGAFATMLTVGYA, FEFPVLLLFSTLGAMMMASSE, LMTLFIGLELSSLAIYILCAF, YFVLGSLASGLLLYGSSLVYG, STAVPMGLMFGIVFMLAGLTF, PTSVTAYMAGAPKFAAFALLL, WQILVEGVSMLSMLFGSLAAI, LMAYSSIGHMGYALMGLCAGT, LVYLTTYLLMNVGAFAVIIAM, ATAMAIFMFSMAGAPPLAGFF, MMVFYAAINAHLFGLAAIGVV, and LSLSFVSVGMGIATTGFLLVL.

This sequence belongs to the complex I subunit 2 family. In terms of assembly, NDH-1 is composed of 14 different subunits. Subunits NuoA, H, J, K, L, M, N constitute the membrane sector of the complex.

The protein localises to the cell inner membrane. It catalyses the reaction a quinone + NADH + 5 H(+)(in) = a quinol + NAD(+) + 4 H(+)(out). Functionally, NDH-1 shuttles electrons from NADH, via FMN and iron-sulfur (Fe-S) centers, to quinones in the respiratory chain. The immediate electron acceptor for the enzyme in this species is believed to be ubiquinone. Couples the redox reaction to proton translocation (for every two electrons transferred, four hydrogen ions are translocated across the cytoplasmic membrane), and thus conserves the redox energy in a proton gradient. The chain is NADH-quinone oxidoreductase subunit N from Gluconacetobacter diazotrophicus (strain ATCC 49037 / DSM 5601 / CCUG 37298 / CIP 103539 / LMG 7603 / PAl5).